The primary structure comprises 379 residues: S-(hydroxymethyl)glutathione dehydrogenase (379 aa).

Cysteine 47 is a Zn(2+) binding site. Histidine 48 contacts NAD(+). The Zn(2+) site is built by histidine 69, glutamate 70, cysteine 99, cysteine 102, cysteine 105, cysteine 113, and cysteine 176. NAD(+) contacts are provided by residues 201 to 206 (GAGCIG), aspartate 225, and 296 to 298 (IGV).

It belongs to the zinc-containing alcohol dehydrogenase family. Class-III subfamily. Zn(2+) is required as a cofactor.

It catalyses the reaction a primary alcohol + NAD(+) = an aldehyde + NADH + H(+). The catalysed reaction is a secondary alcohol + NAD(+) = a ketone + NADH + H(+). The enzyme catalyses S-(hydroxymethyl)glutathione + NADP(+) = S-formylglutathione + NADPH + H(+). It carries out the reaction S-(hydroxymethyl)glutathione + NAD(+) = S-formylglutathione + NADH + H(+). It catalyses the reaction S-nitrosoglutathione + NADH + H(+) = S-(hydroxysulfenamide)glutathione + NAD(+). Functionally, oxidizes long-chain alcohols and, in the presence of glutathione, is able to oxidize formaldehyde. Also acts as a S-nitroso-glutathione reductase by catalyzing the NADH-dependent reduction of S-nitrosoglutathione, thereby regulating protein S-nitrosylation. This is S-(hydroxymethyl)glutathione dehydrogenase (FLD1) from Komagataella pastoris (Yeast).